The chain runs to 398 residues: L-methionine gamma-lyase (398 aa).

Pyridoxal 5'-phosphate-binding positions include 59-61 (YSR) and 89-90 (GM). Residue Tyr-114 participates in substrate binding. 208-210 (SAT) serves as a coordination point for pyridoxal 5'-phosphate. Lys-211 is modified (N6-(pyridoxal phosphate)lysine). Position 375 (Arg-375) interacts with substrate.

This sequence belongs to the trans-sulfuration enzymes family. L-methionine gamma-lyase subfamily. Homotetramer; dimer of active dimers. The cofactor is pyridoxal 5'-phosphate.

The catalysed reaction is L-methionine + H2O = methanethiol + 2-oxobutanoate + NH4(+). The enzyme catalyses L-homocysteine + H2O = 2-oxobutanoate + hydrogen sulfide + NH4(+) + H(+). Irreversibly inactivated by DL-propargylglycine. In terms of biological role, catalyzes the alpha,gamma-elimination of L-methionine to produce methanethiol, 2-oxobutanoate and ammonia. Is involved in L-methionine catabolism. In fact, shows a multicatalytic function since it also catalyzes gamma-replacement of L-methionine with thiol compounds, alpha,gamma-elimination and gamma-replacement reactions of L-homocysteine and its S-substituted derivatives, O-substituted-L-homoserines and DL-selenomethionine, and, to a lesser extent, alpha,beta-elimination and beta-replacement reactions of L-cysteine, S-methyl-L-cysteine, and O-acetyl-L-serine. Also catalyzes deamination and gamma-addition reactions of L-vinylglycine. Thus, the enzyme is able to cleave C-S, C-Se, and C-O bonds of sulfur, selenium, and oxygen amino acids, respectively. The protein is L-methionine gamma-lyase of Pseudomonas putida (Arthrobacter siderocapsulatus).